The primary structure comprises 541 residues: Peptidyl-alpha-hydroxyglycine alpha-amidating lyase 1 (541 aa).

An N-terminal signal peptide occupies residues 1–33 (MKSTDSAKCLGSKSLAICCLLLHLLLCIRPAVS). The Extracellular segment spans residues 34 to 458 (QTQSPQRYLH…VAVHHPSGKA (425 aa)). Asn-92 is a glycosylation site (N-linked (GlcNAc...) asparagine). NHL repeat units follow at residues 164 to 205 (GKVQ…FPPR), 215 to 258 (LGDA…YSRK), and 272 to 314 (GISY…FLSS). 2 disulfide bridges follow: Cys-228-Cys-248 and Cys-299-Cys-310. A glycan (N-linked (GlcNAc...) asparagine) is linked at Asn-315. The stretch at 374–418 (KQLVSKFGPNNLQFQNPHDVAVTADGNEIYVAELNPMRIHKFVHR) is one NHL 4 repeat. Residues 459-479 (ILVASLMLLFAGSTFALALIF) form a helical membrane-spanning segment. Residues 480–541 (ARRRKRGCLP…TKTLASAQYA (62 aa)) lie on the Cytoplasmic side of the membrane. Residues 521–541 (LDQQASDEEQETKTLASAQYA) are disordered.

This sequence belongs to the peptidyl-alpha-hydroxyglycine alpha-amidating lyase family. Zn(2+) is required as a cofactor. N-glycosylated. Widely expressed. In mature larvae, it is ubiquitously expressed with a low expression in all cells and a stronger expression in a subset of neurons. Colocalizes with neuropeptide proctolin. In adults, weak expression is observed in most neuronal cell bodies and in scattered large cells throughout the protocerebrum and also in the subesophageal neuromeres (at protein level).

The protein resides in the cell membrane. The catalysed reaction is a [peptide]-C-terminal (2S)-2-hydroxyglycine = a [peptide]-C-terminal amide + glyoxylate. Its function is as follows. Peptidyl-alpha-hydroxylglycine alpha-amidating lyase that catalyzes an essential reaction in C-terminal alpha-amidation of peptides. Mediates the dismutation of the unstable peptidyl(2-hydroxyglycine) intermediate to glyoxylate and the corresponding desglycine peptide amide. C-terminal amidation of peptides such as neuropeptides is essential for full biological activity. The chain is Peptidyl-alpha-hydroxyglycine alpha-amidating lyase 1 (Pal1) from Drosophila melanogaster (Fruit fly).